Here is a 494-residue protein sequence, read N- to C-terminus: Cytochrome P450 2B11 (494 aa).

At serine 128 the chain carries Phosphoserine; by PKA. Cysteine 436 contributes to the heme binding site.

It belongs to the cytochrome P450 family. Heme is required as a cofactor.

It is found in the endoplasmic reticulum membrane. The protein resides in the microsome membrane. It carries out the reaction an organic molecule + reduced [NADPH--hemoprotein reductase] + O2 = an alcohol + oxidized [NADPH--hemoprotein reductase] + H2O + H(+). Functionally, cytochromes P450 are a group of heme-thiolate monooxygenases. In liver microsomes, this enzyme is involved in an NADPH-dependent electron transport pathway. This isozyme seems responsible for metabolism of 2,2',4,4',5,5'-hexachlorobiphenyl. The protein is Cytochrome P450 2B11 (CYP2B11) of Canis lupus familiaris (Dog).